Reading from the N-terminus, the 398-residue chain is Acetate kinase (398 aa).

Asparagine 8 is a binding site for Mg(2+). Lysine 15 lines the ATP pocket. Arginine 89 lines the substrate pocket. Aspartate 146 functions as the Proton donor/acceptor in the catalytic mechanism. Residues 206–210, 281–283, and 329–333 contribute to the ATP site; these read HIGNG, DLR, and GVGEN. Glutamate 383 serves as a coordination point for Mg(2+).

The protein belongs to the acetokinase family. As to quaternary structure, homodimer. Mg(2+) serves as cofactor. It depends on Mn(2+) as a cofactor.

It localises to the cytoplasm. The catalysed reaction is acetate + ATP = acetyl phosphate + ADP. It participates in metabolic intermediate biosynthesis; acetyl-CoA biosynthesis; acetyl-CoA from acetate: step 1/2. Its function is as follows. Catalyzes the formation of acetyl phosphate from acetate and ATP. Can also catalyze the reverse reaction. The sequence is that of Acetate kinase from Macrococcus caseolyticus (strain JCSC5402) (Macrococcoides caseolyticum).